Consider the following 188-residue polypeptide: U1 small nuclear ribonucleoprotein C-2 (188 aa).

The Matrin-type zinc finger occupies 4–36; the sequence is YYCDYCDVFLVSESPSVRKAHNSGRNHLTNVRD. The disordered stretch occupies residues 57–188; it reads FETGGGNSTS…MNPDRARQLG (132 aa). The segment covering 72–82 has biased composition (pro residues); sequence GNPPGSQPGPP. Residues 109-124 show a composition bias toward low complexity; it reads AMLALMNGQNGMSSPG. Residues 125–141 show a composition bias toward pro residues; the sequence is SGPPPMRFAGPPIPNNM.

This sequence belongs to the U1 small nuclear ribonucleoprotein C family. U1 snRNP is composed of the 7 core Sm proteins B/B', D1, D2, D3, E, F and G that assemble in a heptameric protein ring on the Sm site of the small nuclear RNA to form the core snRNP, and at least 3 U1 snRNP-specific proteins U1-70K, U1-A and U1-C. U1-C interacts with U1 snRNA and the 5' splice-site region of the pre-mRNA.

The protein localises to the nucleus. In terms of biological role, component of the spliceosomal U1 snRNP, which is essential for recognition of the pre-mRNA 5' splice-site and the subsequent assembly of the spliceosome. U1-C is directly involved in initial 5' splice-site recognition for both constitutive and regulated alternative splicing. The interaction with the 5' splice-site seems to precede base-pairing between the pre-mRNA and the U1 snRNA. Stimulates commitment or early (E) complex formation by stabilizing the base pairing of the 5' end of the U1 snRNA and the 5' splice-site region. The polypeptide is U1 small nuclear ribonucleoprotein C-2 (Puccinia graminis f. sp. tritici (strain CRL 75-36-700-3 / race SCCL) (Black stem rust fungus)).